The following is a 436-amino-acid chain: 3-ketoacyl-CoA thiolase (436 aa).

C99 functions as the Acyl-thioester intermediate in the catalytic mechanism. Catalysis depends on proton acceptor residues H392 and C422.

Belongs to the thiolase-like superfamily. Thiolase family. In terms of assembly, heterotetramer of two alpha chains (FadJ) and two beta chains (FadI).

Its subcellular location is the cytoplasm. It carries out the reaction an acyl-CoA + acetyl-CoA = a 3-oxoacyl-CoA + CoA. Its pathway is lipid metabolism; fatty acid beta-oxidation. In terms of biological role, catalyzes the final step of fatty acid oxidation in which acetyl-CoA is released and the CoA ester of a fatty acid two carbons shorter is formed. This is 3-ketoacyl-CoA thiolase from Escherichia coli O8 (strain IAI1).